The primary structure comprises 554 residues: Valerianol synthase TPS1G (554 aa).

Mg(2+)-binding residues include Asp-307 and Asp-311. Positions 326–330 (VQRWD) match the DDXXD motif motif. Residues Asp-452, Ser-456, and Glu-460 each contribute to the Mg(2+) site.

It belongs to the terpene synthase family. Mg(2+) serves as cofactor.

It catalyses the reaction (2E,6E)-farnesyl diphosphate + H2O = valerianol + diphosphate. The protein operates within secondary metabolite biosynthesis; terpenoid biosynthesis. Functionally, terpene synthase that catalyzes the biosynthesis of the terpene valerianol, which is a volatile compound of floral scent. The sequence is that of Valerianol synthase TPS1G from Camellia hiemalis (Camellia).